A 253-amino-acid chain; its full sequence is Phosphate import ATP-binding protein PstB (253 aa).

Residues 5-248 form the ABC transporter domain; that stretch reads IQVRDLNAYY…PSDKRTEDYI (244 aa). 37–44 is a binding site for ATP; sequence GPSGCGKS.

It belongs to the ABC transporter superfamily. Phosphate importer (TC 3.A.1.7) family. As to quaternary structure, the complex is composed of two ATP-binding proteins (PstB), two transmembrane proteins (PstC and PstA) and a solute-binding protein (PstS).

It localises to the cell inner membrane. It carries out the reaction phosphate(out) + ATP + H2O = ADP + 2 phosphate(in) + H(+). Functionally, part of the ABC transporter complex PstSACB involved in phosphate import. Responsible for energy coupling to the transport system. This chain is Phosphate import ATP-binding protein PstB, found in Koribacter versatilis (strain Ellin345).